Here is a 283-residue protein sequence, read N- to C-terminus: ATP phosphoribosyltransferase (283 aa).

Belongs to the ATP phosphoribosyltransferase family. Long subfamily. Equilibrium between an active dimeric form, an inactive hexameric form and higher aggregates. Interconversion between the various forms is largely reversible and is influenced by the natural substrates and inhibitors of the enzyme. Mg(2+) is required as a cofactor.

Its subcellular location is the cytoplasm. The enzyme catalyses 1-(5-phospho-beta-D-ribosyl)-ATP + diphosphate = 5-phospho-alpha-D-ribose 1-diphosphate + ATP. It functions in the pathway amino-acid biosynthesis; L-histidine biosynthesis; L-histidine from 5-phospho-alpha-D-ribose 1-diphosphate: step 1/9. Feedback inhibited by histidine. Catalyzes the condensation of ATP and 5-phosphoribose 1-diphosphate to form N'-(5'-phosphoribosyl)-ATP (PR-ATP). Has a crucial role in the pathway because the rate of histidine biosynthesis seems to be controlled primarily by regulation of HisG enzymatic activity. The polypeptide is ATP phosphoribosyltransferase (Mycobacterium sp. (strain JLS)).